We begin with the raw amino-acid sequence, 612 residues long: Elongation factor 4 (612 aa).

The region spanning 12 to 194 is the tr-type G domain; it reads SRIRNFSIIA…QIVEKVPAPT (183 aa). GTP is bound by residues 24 to 29 and 141 to 144; these read DHGKST and NKID.

It belongs to the TRAFAC class translation factor GTPase superfamily. Classic translation factor GTPase family. LepA subfamily.

It localises to the cell membrane. It catalyses the reaction GTP + H2O = GDP + phosphate + H(+). Its function is as follows. Required for accurate and efficient protein synthesis under certain stress conditions. May act as a fidelity factor of the translation reaction, by catalyzing a one-codon backward translocation of tRNAs on improperly translocated ribosomes. Back-translocation proceeds from a post-translocation (POST) complex to a pre-translocation (PRE) complex, thus giving elongation factor G a second chance to translocate the tRNAs correctly. Binds to ribosomes in a GTP-dependent manner. The protein is Elongation factor 4 of Bacillus subtilis (strain 168).